The primary structure comprises 37 residues: Cytochrome b6-f complex subunit 5 (37 aa).

Residues Leu5–Ala25 traverse the membrane as a helical segment.

It belongs to the PetG family. In terms of assembly, the 4 large subunits of the cytochrome b6-f complex are cytochrome b6, subunit IV (17 kDa polypeptide, PetD), cytochrome f and the Rieske protein, while the 4 small subunits are PetG, PetL, PetM and PetN. The complex functions as a dimer.

Its subcellular location is the plastid. It localises to the chloroplast thylakoid membrane. Functionally, component of the cytochrome b6-f complex, which mediates electron transfer between photosystem II (PSII) and photosystem I (PSI), cyclic electron flow around PSI, and state transitions. PetG is required for either the stability or assembly of the cytochrome b6-f complex. The sequence is that of Cytochrome b6-f complex subunit 5 from Marchantia polymorpha (Common liverwort).